Consider the following 494-residue polypeptide: Psoralen synthase (494 aa).

Residues 12 to 29 (YFFSLFLVTIFLYKWLTL) traverse the membrane as a helical segment. Position 436 (Cys436) interacts with heme.

Belongs to the cytochrome P450 family.

It is found in the endoplasmic reticulum membrane. The protein localises to the microsome membrane. It catalyses the reaction (7S)-marmesin + reduced [NADPH--hemoprotein reductase] + O2 = psoralen + acetone + oxidized [NADPH--hemoprotein reductase] + 2 H2O + H(+). Inhibited by columbianetin. In terms of biological role, involved in linear furanocumarin (psoralen) biosynthesis. Converts marmesin to psoralen. This Ammi majus (Bishop's weed) protein is Psoralen synthase (CYP71AJ1).